A 422-amino-acid polypeptide reads, in one-letter code: Enolase (422 aa).

A (2R)-2-phosphoglycerate-binding site is contributed by Gln-163. The active-site Proton donor is Glu-205. Positions 242, 283, and 310 each coordinate Mg(2+). The (2R)-2-phosphoglycerate site is built by Lys-335, Arg-364, Ser-365, and Lys-386. Lys-335 functions as the Proton acceptor in the catalytic mechanism.

Belongs to the enolase family. Mg(2+) is required as a cofactor.

The protein localises to the cytoplasm. It localises to the secreted. Its subcellular location is the cell surface. It catalyses the reaction (2R)-2-phosphoglycerate = phosphoenolpyruvate + H2O. Its pathway is carbohydrate degradation; glycolysis; pyruvate from D-glyceraldehyde 3-phosphate: step 4/5. In terms of biological role, catalyzes the reversible conversion of 2-phosphoglycerate (2-PG) into phosphoenolpyruvate (PEP). It is essential for the degradation of carbohydrates via glycolysis. This is Enolase from Bdellovibrio bacteriovorus (strain ATCC 15356 / DSM 50701 / NCIMB 9529 / HD100).